The sequence spans 95 residues: Co-chaperonin GroES (95 aa).

This sequence belongs to the GroES chaperonin family. Heptamer of 7 subunits arranged in a ring. Interacts with the chaperonin GroEL.

The protein resides in the cytoplasm. Its function is as follows. Together with the chaperonin GroEL, plays an essential role in assisting protein folding. The GroEL-GroES system forms a nano-cage that allows encapsulation of the non-native substrate proteins and provides a physical environment optimized to promote and accelerate protein folding. GroES binds to the apical surface of the GroEL ring, thereby capping the opening of the GroEL channel. In Streptococcus salivarius, this protein is Co-chaperonin GroES.